Here is a 345-residue protein sequence, read N- to C-terminus: sn-glycerol-3-phosphate import ATP-binding protein UgpC (345 aa).

The region spanning 4-235 (IQLLNIKKQY…PKTIFVADFI (232 aa)) is the ABC transporter domain. Residue 37-44 (GPSGCGKS) coordinates ATP.

It belongs to the ABC transporter superfamily. sn-glycerol-3-phosphate importer (TC 3.A.1.1.3) family. The complex is composed of two ATP-binding proteins (UgpC), two transmembrane proteins (UgpA and UgpE) and a solute-binding protein (UgpB).

The protein resides in the cell inner membrane. The catalysed reaction is sn-glycerol 3-phosphate(out) + ATP + H2O = sn-glycerol 3-phosphate(in) + ADP + phosphate + H(+). In terms of biological role, part of the ABC transporter complex UgpBAEC involved in sn-glycerol-3-phosphate (G3P) import. Responsible for energy coupling to the transport system. The sequence is that of sn-glycerol-3-phosphate import ATP-binding protein UgpC from Bartonella bacilliformis (strain ATCC 35685 / KC583 / Herrer 020/F12,63).